A 111-amino-acid chain; its full sequence is Beta-defensin 126 (111 aa).

An N-terminal signal peptide occupies residues 1-20 (MKSLLFTLAVFMLLAQLVSG). The tract at residues 21-63 (NWYVKKCLNDVGICKKKCKPEEMHVKNGWAMCGKQRDCCVPAD) is in vitro binds to LPS, mediates antimicrobial activity and inhibits LPS-mediated inflammation. 3 disulfide bridges follow: Cys-27-Cys-58, Cys-34-Cys-52, and Cys-38-Cys-59.

This sequence belongs to the beta-defensin family. As to quaternary structure, homodimer or homooligomer; disulfide-linked. O-glycosylated; glycans contain alpha(2,3)-linked sialic acids.

It is found in the secreted. In terms of biological role, highly glycosylated atypical beta-defensin involved in several aspects of sperm function. Facilitates sperm transport in the female reproductive tract and contributes to sperm protection against immunodetection; both functions are probably implicating the negative surface charge provided by its O-linked oligosaccharides in the sperm glycocalyx. Involved in binding of sperm to oviductal epithelial cells to form a sperm reservoir until ovulation. Release from the sperm surface during capacitation and ovaluation by an elevation of oviductal fluid pH is unmasking other surface components and allows sperm to penetrate the cumulus matrix and bind to the zona pellucida of the oocyte. In vitro has antimicrobial activity and may inhibit LPS-mediated inflammation. The chain is Beta-defensin 126 (DEFB126) from Gorilla gorilla gorilla (Western lowland gorilla).